The primary structure comprises 809 residues: Spindle pole body component alp14 (809 aa).

HEAT repeat units lie at residues 127–164 and 167–204; these read DSAA…QFGA and IPSK…WTGD. 3 disordered regions span residues 233–274, 507–608, and 619–638; these read PPKQ…SDDQ, AKAP…SGAL, and ELDD…RYEH. Positions 239-253 are enriched in polar residues; it reads FLKSQQPTSEPNVET. Acidic residues predominate over residues 262–274; sequence ENEESEPEPSDDQ. The segment covering 509–518 has biased composition (basic residues); sequence APTKKSKVKP. Composition is skewed to low complexity over residues 526–551 and 582–595; these read VVVP…SPRK and SRGL…SLQQ. Residues S543 and S548 each carry the phosphoserine modification. Over residues 597-608 the composition is skewed to polar residues; the sequence is VKASTPLNSGAL. A coiled-coil region spans residues 637-697; it reads EHPKVLEDND…NTLRSARKAS (61 aa). S697 and S720 each carry phosphoserine.

The protein belongs to the TOG/XMAP215 family. As to quaternary structure, interacts with alp14.

The protein resides in the cytoplasm. It is found in the cytoskeleton. The protein localises to the microtubule organizing center. It localises to the spindle pole body. Its subcellular location is the chromosome. The protein resides in the centromere. It is found in the kinetochore. Required for bipolar spindle formation and proper chromosome segregation. Has a role in connecting the kinetochores and the plus end of pole to chromosome microtubules. Also required for the activation of the spindle checkpoint pathway. The sequence is that of Spindle pole body component alp14 (alp14) from Schizosaccharomyces pombe (strain 972 / ATCC 24843) (Fission yeast).